Here is a 67-residue protein sequence, read N- to C-terminus: DNA-directed RNA polymerase subunit omega (67 aa).

This sequence belongs to the RNA polymerase subunit omega family. In terms of assembly, the RNAP catalytic core consists of 2 alpha, 1 beta, 1 beta' and 1 omega subunit. When a sigma factor is associated with the core the holoenzyme is formed, which can initiate transcription.

It carries out the reaction RNA(n) + a ribonucleoside 5'-triphosphate = RNA(n+1) + diphosphate. Promotes RNA polymerase assembly. Latches the N- and C-terminal regions of the beta' subunit thereby facilitating its interaction with the beta and alpha subunits. The sequence is that of DNA-directed RNA polymerase subunit omega from Moorella thermoacetica (strain ATCC 39073 / JCM 9320).